The primary structure comprises 229 residues: Potassium/proton antiporter CemA (229 aa).

Transmembrane regions (helical) follow at residues 7 to 27 (FTPL…SLSF), 114 to 134 (IICF…LVIL), and 189 to 209 (ILSG…KFWI).

The protein belongs to the CemA family.

It is found in the plastid. The protein resides in the chloroplast inner membrane. The enzyme catalyses K(+)(in) + H(+)(out) = K(+)(out) + H(+)(in). Functionally, contributes to K(+)/H(+) antiport activity by supporting proton efflux to control proton extrusion and homeostasis in chloroplasts in a light-dependent manner to modulate photosynthesis. Prevents excessive induction of non-photochemical quenching (NPQ) under continuous-light conditions. Indirectly promotes efficient inorganic carbon uptake into chloroplasts. The chain is Potassium/proton antiporter CemA from Panax ginseng (Korean ginseng).